The primary structure comprises 139 residues: Peptide methionine sulfoxide reductase MsrB (139 aa).

A MsrB domain is found at 17–139; sequence EEQWRRELSP…NSAALKLEPK (123 aa). 4 residues coordinate Zn(2+): Cys-56, Cys-59, Cys-105, and Cys-108. Cys-128 serves as the catalytic Nucleophile.

Belongs to the MsrB Met sulfoxide reductase family. Requires Zn(2+) as cofactor.

The enzyme catalyses L-methionyl-[protein] + [thioredoxin]-disulfide + H2O = L-methionyl-(R)-S-oxide-[protein] + [thioredoxin]-dithiol. This Bradyrhizobium diazoefficiens (strain JCM 10833 / BCRC 13528 / IAM 13628 / NBRC 14792 / USDA 110) protein is Peptide methionine sulfoxide reductase MsrB.